A 265-amino-acid chain; its full sequence is uncharacterized protein (265 aa).

The active site involves E47.

The protein belongs to the PhzF family.

This is an uncharacterized protein from Halalkalibacterium halodurans (strain ATCC BAA-125 / DSM 18197 / FERM 7344 / JCM 9153 / C-125) (Bacillus halodurans).